The primary structure comprises 1005 residues: Increased rDNA silencing protein 4 (1005 aa).

Over residues 1 to 18 (MSALSASLAAAAAAARAS) the composition is skewed to low complexity. 8 disordered regions span residues 1–170 (MSAL…PTPV), 183–219 (RAAA…QSSL), 239–258 (QSFA…GDFE), 272–350 (QSAA…KDAK), 402–587 (SPNF…TFSA), 602–624 (KRRR…SSPV), 657–682 (GNNG…LALT), and 735–776 (NKAT…HNDA). The span at 63–75 (VDTSVANTPAPQG) shows a compositional bias: polar residues. Residues 76 to 86 (SSATSAAAAAA) show a composition bias toward low complexity. The span at 111–126 (HRNSGESAKTPSSDSR) shows a compositional bias: polar residues. The segment covering 127 to 161 (PASTTSTIPVTPVSATTPSSTVAAAASAAAKRSST) has biased composition (low complexity). A compositionally biased stretch (polar residues) spans 204–219 (SPSNSVRSKRLSQSSL). The segment covering 246–258 (TDEDSPGEMGDFE) has biased composition (acidic residues). Polar residues-rich tracts occupy residues 280–297 (RLSQ…QLQP) and 320–333 (SNAS…SLTN). Basic and acidic residues predominate over residues 408-419 (RPGEHFHNHQRE). Composition is skewed to polar residues over residues 451 to 466 (SIDT…TSPI) and 497 to 522 (LQQS…SIAS). 2 stretches are compositionally biased toward low complexity: residues 568 to 578 (SSSQSQRNSLQ) and 608 to 624 (ARTP…SSPV). Positions 763–776 (KFNEDKPWKHHNDA) are enriched in basic and acidic residues. In terms of domain architecture, EH spans 845-934 (MSGENIGNDD…PRVWGSVGRL (90 aa)). The disordered stretch occupies residues 942–1005 (QKEPKRNSAK…RRDKKRVGEA (64 aa)). Positions 948–960 (NSAKRKARRKVRR) are enriched in basic residues. Basic and acidic residues predominate over residues 961-1005 (DRKELVRERERNEKERRKDEKKEKKDEKKDKKDDRRRDKKRVGEA).

It belongs to the IRS4 family.

Functionally, positive regulator of phosphatidylinositol 4,5-bisphosphate turnover and negatively regulates signaling through the cell integrity pathway. Involved in rDNA silencing. This chain is Increased rDNA silencing protein 4 (IRS4), found in Yarrowia lipolytica (strain CLIB 122 / E 150) (Yeast).